A 297-amino-acid polypeptide reads, in one-letter code: Protoheme IX farnesyltransferase (297 aa).

Transmembrane regions (helical) follow at residues 23–43 (VTQL…PGLP), 49–69 (VFGT…NCLI), 90–110 (ISAA…MLVL), 117–137 (LTMW…TVIL), 144–164 (NIVI…AAVA), 171–191 (AWVL…ALAL), 215–235 (RLHI…PYII), 238–258 (SGLL…AYAW), and 277–297 (ILYL…GLLA).

This sequence belongs to the UbiA prenyltransferase family. Protoheme IX farnesyltransferase subfamily.

The protein localises to the cell inner membrane. The catalysed reaction is heme b + (2E,6E)-farnesyl diphosphate + H2O = Fe(II)-heme o + diphosphate. Its pathway is porphyrin-containing compound metabolism; heme O biosynthesis; heme O from protoheme: step 1/1. Its function is as follows. Converts heme B (protoheme IX) to heme O by substitution of the vinyl group on carbon 2 of heme B porphyrin ring with a hydroxyethyl farnesyl side group. This Bordetella petrii (strain ATCC BAA-461 / DSM 12804 / CCUG 43448) protein is Protoheme IX farnesyltransferase.